The chain runs to 184 residues: mRNA transport regulator MTR2 (184 aa).

The disordered stretch occupies residues 111–135 (KMGQDATVPIQPNNTGNRNRPNDMN). Polar residues predominate over residues 120-129 (IQPNNTGNRN). Position 125 is a phosphothreonine (Thr125).

Interacts with MEX67.

It is found in the nucleus. Affects mRNA transport from the nucleus to the cytoplasm. The polypeptide is mRNA transport regulator MTR2 (MTR2) (Saccharomyces cerevisiae (strain ATCC 204508 / S288c) (Baker's yeast)).